The chain runs to 158 residues: Ribonuclease H (158 aa).

Residues 1–147 (MKVTIYTDGA…CDVLATTAAD (147 aa)) enclose the RNase H type-1 domain. The Mg(2+) site is built by D8, E52, D74, and D139.

It belongs to the RNase H family. Monomer. The cofactor is Mg(2+).

It is found in the cytoplasm. The catalysed reaction is Endonucleolytic cleavage to 5'-phosphomonoester.. Endonuclease that specifically degrades the RNA of RNA-DNA hybrids. This is Ribonuclease H from Lachnoclostridium phytofermentans (strain ATCC 700394 / DSM 18823 / ISDg) (Clostridium phytofermentans).